Reading from the N-terminus, the 397-residue chain is Subtilisin-like serine protease Pen c 1 (397 aa).

Residues 1-19 (MGFLKVLATSLATLAVVDA) form the signal peptide. A propeptide spans 20–115 (GTLLTASNTD…IEPDMIVNAT (96 aa)) (removed in mature form). The 79-residue stretch at 35–113 (SYIVVMNDDV…KYIEPDMIVN (79 aa)) folds into the Inhibitor I9 domain. Positions 125–397 (SWGLARISSK…SKLLYNGINV (273 aa)) constitute a Peptidase S8 domain. Catalysis depends on charge relay system residues aspartate 157, histidine 188, and serine 343.

It belongs to the peptidase S8 family.

It is found in the secreted. With respect to regulation, inhibited by 0.1 mM diisopropyl fluorophosphate (DFP), phenylmethanesulfonyl fluoride (PMSF), chymostatin and elastatinal. Not inhibited by N-alpha-p-tosyl-L-lysine chloromethylketone (TLCK), N-tosyl-L-phenylalanyl chloromethyl ketone (TPCK) or N-carbobenzoxy-L-phenylalanine chloromethylketone (ZPCK). Functionally, serine protease. Hydrolyzes azocasein. Cleaves peptide bonds of the oxidized insulin B chain preferably at 15-Leu-|-Tyr-16, but also at 4-Gln-|-His-5 and 24-Phe-|-Phe-25, and to a lesser extent at 5-His-|-Leu-6 and 25-Phe-|-Tyr-26. Hydrolyzes amide bonds between amino acids and 7-amino-4-methylcoumarin (AMC) in vitro. The sequence is that of Subtilisin-like serine protease Pen c 1 from Penicillium citrinum.